We begin with the raw amino-acid sequence, 157 residues long: ABA-responsive protein ABR17 (157 aa).

This sequence belongs to the BetVI family.

This Pisum sativum (Garden pea) protein is ABA-responsive protein ABR17.